The primary structure comprises 318 residues: Malate dehydrogenase (318 aa).

NAD(+) is bound by residues 10 to 15 and aspartate 34; that span reads GGGQIG. Substrate-binding residues include arginine 83 and arginine 89. NAD(+)-binding positions include asparagine 96 and 119–121; that span reads ISN. 2 residues coordinate substrate: asparagine 121 and arginine 152. Histidine 176 serves as the catalytic Proton acceptor.

Belongs to the LDH/MDH superfamily. MDH type 3 family.

The catalysed reaction is (S)-malate + NAD(+) = oxaloacetate + NADH + H(+). In terms of biological role, catalyzes the reversible oxidation of malate to oxaloacetate. The protein is Malate dehydrogenase of Geotalea uraniireducens (strain Rf4) (Geobacter uraniireducens).